Here is a 397-residue protein sequence, read N- to C-terminus: Lipid-A-disaccharide synthase (397 aa).

This sequence belongs to the LpxB family.

The enzyme catalyses a lipid X + a UDP-2-N,3-O-bis[(3R)-3-hydroxyacyl]-alpha-D-glucosamine = a lipid A disaccharide + UDP + H(+). It functions in the pathway bacterial outer membrane biogenesis; LPS lipid A biosynthesis. In terms of biological role, condensation of UDP-2,3-diacylglucosamine and 2,3-diacylglucosamine-1-phosphate to form lipid A disaccharide, a precursor of lipid A, a phosphorylated glycolipid that anchors the lipopolysaccharide to the outer membrane of the cell. This is Lipid-A-disaccharide synthase from Mannheimia succiniciproducens (strain KCTC 0769BP / MBEL55E).